Consider the following 1142-residue polypeptide: Serine/threonine-protein kinase dst2 (1142 aa).

Residues phenylalanine 20–valine 276 form the Protein kinase domain. ATP-binding positions include isoleucine 26 to valine 34 and lysine 49. Aspartate 141 acts as the Proton acceptor in catalysis. Acidic residues predominate over residues leucine 300–aspartate 322. 5 disordered regions span residues leucine 300–glutamate 492, lysine 515–proline 636, glutamate 744–arginine 768, serine 939–threonine 974, and glutamate 1040–aspartate 1142. Positions serine 323–serine 336 are enriched in basic and acidic residues. The segment covering glutamine 355–leucine 365 has biased composition (polar residues). Over residues glutamine 371–glutamine 390 the composition is skewed to low complexity. Polar residues predominate over residues proline 391–asparagine 413. The segment covering alanine 421–glycine 452 has biased composition (low complexity). Residues serine 467–threonine 477 show a composition bias toward basic and acidic residues. Residues lysine 541 to serine 554 are compositionally biased toward low complexity. Basic and acidic residues-rich tracts occupy residues alanine 555 to glutamine 588, lysine 597 to threonine 635, glutamate 744 to isoleucine 760, and serine 939 to lysine 969. The stretch at glutamine 716–lysine 1050 forms a coiled coil. Over residues threonine 1068–asparagine 1091 the composition is skewed to low complexity.

The protein belongs to the protein kinase superfamily. STE Ser/Thr protein kinase family. STE20 subfamily. It depends on Mg(2+) as a cofactor.

It carries out the reaction L-seryl-[protein] + ATP = O-phospho-L-seryl-[protein] + ADP + H(+). The enzyme catalyses L-threonyl-[protein] + ATP = O-phospho-L-threonyl-[protein] + ADP + H(+). In Dictyostelium discoideum (Social amoeba), this protein is Serine/threonine-protein kinase dst2.